Reading from the N-terminus, the 273-residue chain is Secretory carrier-associated membrane protein 6 (273 aa).

The segment at 1–69 (MHHDPNPFDE…MGDSKSKARE (69 aa)) is disordered. Residues 1–131 (MHHDPNPFDE…LQKLQYLAFA (131 aa)) lie on the Cytoplasmic side of the membrane. The segment covering 20 to 30 (NGGGGGGGGGS) has biased composition (gly residues). Residues 68 to 94 (RELSSWETDLKRREADIKRREEALRNA) adopt a coiled-coil conformation. 4 helical membrane-spanning segments follow: residues 132-152 (SWLGIVLCLSWNFIAVIVCWI), 159-179 (LFFLATIYALLGIPLSYLIWY), 194-214 (FGWFFLCYLIHIGFCIIAAIA), and 239-259 (IIGIFYFVGFALFCLETLLSI). Residues 260–273 (GVLQRVYMYFRGNK) are Cytoplasmic-facing.

It belongs to the SCAMP family.

Its subcellular location is the cell membrane. It is found in the cytoplasmic vesicle. The protein localises to the secretory vesicle membrane. Probably involved in membrane trafficking. The sequence is that of Secretory carrier-associated membrane protein 6 (SCAMP6) from Oryza sativa subsp. japonica (Rice).